The chain runs to 577 residues: MDSDYSDKKGVSVLMDLFEMKGIRKLVMSPGSRNAPLLFSFSRNPAFEKYVIADERSAGFFALGLALASGEAVGLVCTSGTAMLNYAPAVAEAFYRGIPLVAVTADRPAEWIDQDEGQTIRQEGAMAGFVKSYCSLRAEFDTSASAWYANRRLNEVLNHALMPRRGPVHINMSFCEPLYGTSSGYSGKERAITFVRERQELPEEVWDMLVKRFLEAPRVMIVAGFYPPDEDVSAALQDICKFPHTVLFAESLSNIRTDTGICTADRVLAAAGEDESLYPELLISFGGSLISRMLKTFLRRAKPAEHWGIDERFPAPDTFCALTHHICTGASGFWKEFAGRLKDKAPESLSPEGISYAGSWQKIKRKADLLHRTFMADAGWSDLKAFEVILRHIPHDAALHAANSTPVRYLQLFEHAHYAGGEWSNRGTNGIEGATSTAMGFSEVYSGTTLLITGDLSFMYDSNALWMPYVNGRIRVIVMRNGGGGIFRFIPGPDSLKELETCFETPLEVPVREMAGAYGWRYMKAVSAEELETVLPSFFASGDRAVLLEVETPRFENAPVLKSYFTYISGESYPVNR.

Belongs to the TPP enzyme family. MenD subfamily. As to quaternary structure, homodimer. Requires Mg(2+) as cofactor. The cofactor is Mn(2+). It depends on thiamine diphosphate as a cofactor.

The catalysed reaction is isochorismate + 2-oxoglutarate + H(+) = 5-enolpyruvoyl-6-hydroxy-2-succinyl-cyclohex-3-ene-1-carboxylate + CO2. It functions in the pathway quinol/quinone metabolism; 1,4-dihydroxy-2-naphthoate biosynthesis; 1,4-dihydroxy-2-naphthoate from chorismate: step 2/7. It participates in quinol/quinone metabolism; menaquinone biosynthesis. Catalyzes the thiamine diphosphate-dependent decarboxylation of 2-oxoglutarate and the subsequent addition of the resulting succinic semialdehyde-thiamine pyrophosphate anion to isochorismate to yield 2-succinyl-5-enolpyruvyl-6-hydroxy-3-cyclohexene-1-carboxylate (SEPHCHC). This chain is 2-succinyl-5-enolpyruvyl-6-hydroxy-3-cyclohexene-1-carboxylate synthase, found in Porphyromonas gingivalis (strain ATCC BAA-308 / W83).